A 429-amino-acid chain; its full sequence is Phosphoribosylamine--glycine ligase (429 aa).

Residues 109–316 enclose the ATP-grasp domain; sequence KDFLARHKIP…LVELCLAACE (208 aa). 135–196 is an ATP binding site; it reads LREKGAPIVI…EEFLDGEEAS (62 aa). Residues 212-236 form a disordered region; that stretch reads SQDHKRVGDKDTGPNTGGMGAYSPA. Over residues 213–223 the composition is skewed to basic and acidic residues; the sequence is QDHKRVGDKDT. Glu-286 and Asn-288 together coordinate Mg(2+).

It belongs to the GARS family. Monomer. The cofactor is Mg(2+). Mn(2+) serves as cofactor.

It catalyses the reaction 5-phospho-beta-D-ribosylamine + glycine + ATP = N(1)-(5-phospho-beta-D-ribosyl)glycinamide + ADP + phosphate + H(+). Its pathway is purine metabolism; IMP biosynthesis via de novo pathway; N(1)-(5-phospho-D-ribosyl)glycinamide from 5-phospho-alpha-D-ribose 1-diphosphate: step 2/2. In terms of biological role, catalyzes the reversible conversion of phosphoribosylamine to glycinamide ribonucleotide, an enzymatic step in purine biosynthesis pathway. This chain is Phosphoribosylamine--glycine ligase (purD), found in Escherichia coli (strain K12).